The primary structure comprises 189 residues: GTPase NRas (189 aa).

10-17 (GAGGVGKS) contacts GTP. The Effector region motif lies at 32 to 40 (YDPTIEDSY). GTP contacts are provided by residues 57 to 61 (DTAGQ) and 116 to 119 (NKCD). The hypervariable region stretch occupies residues 166-185 (YRMKKLDSSEDNNQGCIRIP). Cysteine 181 carries S-palmitoyl cysteine lipidation. Cysteine 186 is lipidated: S-farnesyl cysteine. Residues 187 to 189 (KLM) constitute a propeptide, removed in mature form.

The protein belongs to the small GTPase superfamily. Ras family. Palmitoylated by the ZDHHC9-GOLGA7 complex. Depalmitoylated by abhd17a, abhd17b and abhd17c. A continuous cycle of de- and re-palmitoylation regulates rapid exchange between plasma membrane and Golgi.

Its subcellular location is the cell membrane. The protein resides in the golgi apparatus membrane. The enzyme catalyses GTP + H2O = GDP + phosphate + H(+). Alternates between an inactive form bound to GDP and an active form bound to GTP. Activated by a guanine nucleotide-exchange factor (GEF) and inactivated by a GTPase-activating protein (GAP). In terms of biological role, ras proteins bind GDP/GTP and possess intrinsic GTPase activity. This Xenopus laevis (African clawed frog) protein is GTPase NRas (nras).